The sequence spans 91 residues: Cell division protein FtsB (91 aa).

Residues 1–3 (MRW) are Cytoplasmic-facing. Residues 4-21 (PLIVLAVLVIVLQYPLWL) form a helical membrane-spanning segment. Residues 22–91 (GKGGWLRVWD…EIFVHTPRKP (70 aa)) are Periplasmic-facing. The stretch at 28–74 (RVWDVDRQLQAQRETNQRLEQRNAGLEAEVRDLKSGNEAVEERARFE) forms a coiled coil.

The protein belongs to the FtsB family. In terms of assembly, part of a complex composed of FtsB, FtsL and FtsQ.

It is found in the cell inner membrane. Its function is as follows. Essential cell division protein. May link together the upstream cell division proteins, which are predominantly cytoplasmic, with the downstream cell division proteins, which are predominantly periplasmic. This chain is Cell division protein FtsB, found in Aromatoleum aromaticum (strain DSM 19018 / LMG 30748 / EbN1) (Azoarcus sp. (strain EbN1)).